The sequence spans 199 residues: Peptidyl-prolyl cis-trans isomerase CYP22 (199 aa).

In terms of domain architecture, PPIase cyclophilin-type spans 35–198; it reads FFDVSIGGIP…LAVVITECGE (164 aa).

Belongs to the cyclophilin-type PPIase family. Ubiquitous.

The catalysed reaction is [protein]-peptidylproline (omega=180) = [protein]-peptidylproline (omega=0). In terms of biological role, PPIases accelerate the folding of proteins. It catalyzes the cis-trans isomerization of proline imidic peptide bonds in oligopeptides. In Arabidopsis thaliana (Mouse-ear cress), this protein is Peptidyl-prolyl cis-trans isomerase CYP22 (CYP22).